Here is a 314-residue protein sequence, read N- to C-terminus: tRNA dimethylallyltransferase 1 (314 aa).

8 to 15 (GPTGTGKS) lines the ATP pocket. 10 to 15 (TGTGKS) is a substrate binding site.

The protein belongs to the IPP transferase family. As to quaternary structure, monomer. It depends on Mg(2+) as a cofactor.

It catalyses the reaction adenosine(37) in tRNA + dimethylallyl diphosphate = N(6)-dimethylallyladenosine(37) in tRNA + diphosphate. Its function is as follows. Catalyzes the transfer of a dimethylallyl group onto the adenine at position 37 in tRNAs that read codons beginning with uridine, leading to the formation of N6-(dimethylallyl)adenosine (i(6)A). This Mycobacterium marinum (strain ATCC BAA-535 / M) protein is tRNA dimethylallyltransferase 1.